We begin with the raw amino-acid sequence, 186 residues long: MEQPKDGAGPEGNNLSLPSSGTEPWPPAPLPAPPPLLLNSTDPTHLGLPESVASVTVPIRLDTLSCLLHSALLGAYTFQQALPSCPCCSQAGHSQPGAVRRPPRGRGGWEVRHRPGWGRGLHRRGLGRAEQPERGRAGGPGAGPRTPPMTLPSPPTLPAQDGKKEARGPEPPLETPLAAEDWETEY.

Disordered regions lie at residues 1 to 42 (MEQP…NSTD) and 89 to 186 (SQAG…ETEY). Over residues 13-22 (NNLSLPSSGT) the composition is skewed to polar residues. The span at 24 to 36 (PWPPAPLPAPPPL) shows a compositional bias: pro residues. Basic residues predominate over residues 114–126 (RPGWGRGLHRRGL). The span at 145-157 (RTPPMTLPSPPTL) shows a compositional bias: pro residues.

As to quaternary structure, interacts with SPOCD1.

The protein resides in the nucleus. It is found in the nucleoplasm. In terms of biological role, protein adapter involved in piRNA-directed transposon methylation by connecting PIWIL4-piRNA and DNA methylation machineries. The PIWIL4-piRNA pathway plays a central role during spermatogenesis by directing transposon DNA methylation and silencing, thereby preventing their mobilization, which is essential for the germline integrity. The sequence is that of piRNA-mediated silencing protein C19orf84 from Homo sapiens (Human).